Reading from the N-terminus, the 205-residue chain is MLILAGLGNPEPKYEKNRHNVGFMAVDALARKWGTAPWRARFQGLACEGQVSTPDGPVKLLLLKPKTYYNESGRAVGEAMKFFKLQPTDVIVFHDEIDMAPGRFRMKSGGGAAGNNGIRSVTSQVGDAFRRGRIGVGHPGHKDAVMHYVLGDFHKVEHQWLDPILDAIADALPFAAVGDDERYQAEVMRLAPAPKADPRKPAKDD.

Tyr-14 serves as a coordination point for tRNA. His-19 acts as the Proton acceptor in catalysis. Residues Tyr-68, Asn-70, and Asn-116 each contribute to the tRNA site.

This sequence belongs to the PTH family. In terms of assembly, monomer.

The protein localises to the cytoplasm. The catalysed reaction is an N-acyl-L-alpha-aminoacyl-tRNA + H2O = an N-acyl-L-amino acid + a tRNA + H(+). Its function is as follows. Hydrolyzes ribosome-free peptidyl-tRNAs (with 1 or more amino acids incorporated), which drop off the ribosome during protein synthesis, or as a result of ribosome stalling. Functionally, catalyzes the release of premature peptidyl moieties from peptidyl-tRNA molecules trapped in stalled 50S ribosomal subunits, and thus maintains levels of free tRNAs and 50S ribosomes. The chain is Peptidyl-tRNA hydrolase from Caulobacter vibrioides (strain ATCC 19089 / CIP 103742 / CB 15) (Caulobacter crescentus).